Here is a 138-residue protein sequence, read N- to C-terminus: Small ribosomal subunit protein uS11c (138 aa).

The tract at residues 1-22 (MAKLLPRIGSRKNGRISSRKNA) is disordered. Over residues 9–22 (GSRKNGRISSRKNA) the composition is skewed to basic residues.

This sequence belongs to the universal ribosomal protein uS11 family. As to quaternary structure, part of the 30S ribosomal subunit.

It localises to the plastid. The protein resides in the chloroplast. The sequence is that of Small ribosomal subunit protein uS11c from Populus alba (White poplar).